The chain runs to 80 residues: Cytochrome c oxidase subunit 7B, mitochondrial (80 aa).

The transit peptide at 1–24 directs the protein to the mitochondrion; that stretch reads MLPLAKNALSRLQVRSIQQVVARQ. Topologically, residues 25-32 are mitochondrial matrix; the sequence is SHQKKTPT. Residues 33-59 traverse the membrane as a helical segment; sequence FHDKYGNAVLAGGSIFCISAWTYTATQ. At 60-80 the chain is on the mitochondrial intermembrane side; that stretch reads IGIEWNLSPVGRVTPKEWRDQ.

Belongs to the cytochrome c oxidase VIIb family. Component of the cytochrome c oxidase (complex IV, CIV), a multisubunit enzyme composed of 14 subunits. The complex is composed of a catalytic core of 3 subunits MT-CO1, MT-CO2 and MT-CO3, encoded in the mitochondrial DNA, and 11 supernumerary subunits COX4I, COX5A, COX5B, COX6A, COX6B, COX6C, COX7A, COX7B, COX7C, COX8 and NDUFA4, which are encoded in the nuclear genome. The complex exists as a monomer or a dimer and forms supercomplexes (SCs) in the inner mitochondrial membrane with NADH-ubiquinone oxidoreductase (complex I, CI) and ubiquinol-cytochrome c oxidoreductase (cytochrome b-c1 complex, complex III, CIII), resulting in different assemblies (supercomplex SCI(1)III(2)IV(1) and megacomplex MCI(2)III(2)IV(2)).

It is found in the mitochondrion inner membrane. Its pathway is energy metabolism; oxidative phosphorylation. Its function is as follows. Component of the cytochrome c oxidase, the last enzyme in the mitochondrial electron transport chain which drives oxidative phosphorylation. The respiratory chain contains 3 multisubunit complexes succinate dehydrogenase (complex II, CII), ubiquinol-cytochrome c oxidoreductase (cytochrome b-c1 complex, complex III, CIII) and cytochrome c oxidase (complex IV, CIV), that cooperate to transfer electrons derived from NADH and succinate to molecular oxygen, creating an electrochemical gradient over the inner membrane that drives transmembrane transport and the ATP synthase. Cytochrome c oxidase is the component of the respiratory chain that catalyzes the reduction of oxygen to water. Electrons originating from reduced cytochrome c in the intermembrane space (IMS) are transferred via the dinuclear copper A center (CU(A)) of subunit 2 and heme A of subunit 1 to the active site in subunit 1, a binuclear center (BNC) formed by heme A3 and copper B (CU(B)). The BNC reduces molecular oxygen to 2 water molecules using 4 electrons from cytochrome c in the IMS and 4 protons from the mitochondrial matrix. Plays a role in proper central nervous system (CNS) development in vertebrates. The chain is Cytochrome c oxidase subunit 7B, mitochondrial (Cox7b) from Rattus norvegicus (Rat).